Reading from the N-terminus, the 305-residue chain is ATP synthase gamma chain (305 aa).

This sequence belongs to the ATPase gamma chain family. As to quaternary structure, F-type ATPases have 2 components, CF(1) - the catalytic core - and CF(0) - the membrane proton channel. CF(1) has five subunits: alpha(3), beta(3), gamma(1), delta(1), epsilon(1). CF(0) has three main subunits: a, b and c.

It is found in the cell membrane. Its function is as follows. Produces ATP from ADP in the presence of a proton gradient across the membrane. The gamma chain is believed to be important in regulating ATPase activity and the flow of protons through the CF(0) complex. The chain is ATP synthase gamma chain from Mycobacterium tuberculosis (strain ATCC 25177 / H37Ra).